A 227-amino-acid polypeptide reads, in one-letter code: PKHD-type hydroxylase Bphy_5374 (227 aa).

A Fe2OG dioxygenase domain is found at 79–179 (KVYPPLFNRY…RVASFFWVQS (101 aa)). Fe cation is bound by residues H97, D99, and H160. Residue R170 participates in 2-oxoglutarate binding.

Fe(2+) is required as a cofactor. Requires L-ascorbate as cofactor.

This chain is PKHD-type hydroxylase Bphy_5374, found in Paraburkholderia phymatum (strain DSM 17167 / CIP 108236 / LMG 21445 / STM815) (Burkholderia phymatum).